The sequence spans 230 residues: Flagellar L-ring protein (230 aa).

An N-terminal signal peptide occupies residues 1 to 15 (MSRPPLLSSACLAAT). A lipid anchor (N-palmitoyl cysteine) is attached at Cys-16. Residue Cys-16 is the site of S-diacylglycerol cysteine attachment.

It belongs to the FlgH family. As to quaternary structure, the basal body constitutes a major portion of the flagellar organelle and consists of four rings (L,P,S, and M) mounted on a central rod.

It localises to the cell outer membrane. The protein resides in the bacterial flagellum basal body. Functionally, assembles around the rod to form the L-ring and probably protects the motor/basal body from shearing forces during rotation. The polypeptide is Flagellar L-ring protein (Xanthomonas oryzae pv. oryzae (strain MAFF 311018)).